Here is a 415-residue protein sequence, read N- to C-terminus: Nacrein-like protein C2 (415 aa).

Asn27 carries an N-linked (GlcNAc...) asparagine glycan. The region spanning 33–414 (AGFSYDRSIC…KNKVTVYKSF (382 aa)) is the Alpha-carbonic anhydrase domain. Zn(2+)-binding residues include His132, His134, and His157. Residues 201–297 (DEPDDEECKH…GENGHKHGCR (97 aa)) form a disordered region. Positions 207 to 219 (ECKHILKGHHPDN) are enriched in basic and acidic residues. Residues 220–289 (NENGNGDNGN…NNGENGNNGE (70 aa)) are compositionally biased toward low complexity. 22 repeat units span residues 225-227 (GDN), 228-230 (GNN), 231-233 (GYN), 234-236 (GDN), 237-239 (GNN), 240-242 (GDN), 243-245 (GNN), 246-248 (GYN), 249-251 (GDN), 252-254 (GNN), 255-257 (GVN), 258-260 (GNN), 261-263 (GYN), 264-266 (GDN), 267-269 (GNN), 270-272 (GDN), 273-275 (GNN), 276-278 (GEN), 279-281 (GNN), 282-284 (GEN), 285-286 (GN), and 288-290 (GEN). Residues 225-290 (GDNGNNGYNG…NGENGNNGEN (66 aa)) form a 27 X 3 AA approximate tandem repeats of G-X-N region. Position 355–356 (355–356 (TT)) interacts with substrate.

Belongs to the alpha-carbonic anhydrase family. In terms of assembly, homooligomer; disulfide-linked. May also be disulfide-linked to insoluble organic matrix. Requires Zn(2+) as cofactor. As to expression, expressed in the mantle.

It localises to the secreted. Its subcellular location is the extracellular space. The protein resides in the extracellular matrix. It carries out the reaction hydrogencarbonate + H(+) = CO2 + H2O. In terms of biological role, acts as a negative regulator for calcification in the shells of mollusks. May function both as a calcium concentrator and as a carbonic anhydrase required for production of carbonate ions, which are assembled to CaCO(3) at mineralization sites. Is important for shell formation in both the calcitic prismatic layer and the aragonitic nacreous layer. Shows inhibitory activity of crystal formation when present in free state but, when attached to the insoluble matrix, may regulate the form and size of aragonite crystal. In Crassostrea nippona (Iwagaki oyster), this protein is Nacrein-like protein C2.